The following is a 241-amino-acid chain: Guanosine phosphorylase (241 aa).

It belongs to the PNP/UDP phosphorylase family.

It catalyses the reaction guanosine + phosphate = alpha-D-ribose 1-phosphate + guanine. The catalysed reaction is a purine D-ribonucleoside + phosphate = a purine nucleobase + alpha-D-ribose 1-phosphate. The enzyme catalyses inosine + phosphate = alpha-D-ribose 1-phosphate + hypoxanthine. It carries out the reaction adenosine + phosphate = alpha-D-ribose 1-phosphate + adenine. With respect to regulation, activity is higher at low KCl concentrations. Phosphorylase involved in the non-carboxylating pentose bisphosphate pathway, a nucleoside degradation pathway present in some halophilic archaea. Catalyzes the phosphorolytic cleavage of guanosine to guanine and ribose-1-phosphate (R1P). Exhibits the highest activity toward guanosine, but also shows lower activity against inosine and adenosine. This Halorubrum lacusprofundi (strain ATCC 49239 / DSM 5036 / JCM 8891 / ACAM 34) protein is Guanosine phosphorylase.